A 459-amino-acid polypeptide reads, in one-letter code: Glutamyl-tRNA(Gln) amidotransferase subunit A, mitochondrial (459 aa).

Catalysis depends on charge relay system residues Lys-37 and Ser-114. Ser-138 functions as the Acyl-ester intermediate in the catalytic mechanism.

The protein belongs to the amidase family. GatA subfamily. As to quaternary structure, subunit of the heterotrimeric GatFAB amidotransferase (AdT) complex, composed of A, B and F subunits.

The protein resides in the mitochondrion. The catalysed reaction is L-glutamyl-tRNA(Gln) + L-glutamine + ATP + H2O = L-glutaminyl-tRNA(Gln) + L-glutamate + ADP + phosphate + H(+). Allows the formation of correctly charged Gln-tRNA(Gln) through the transamidation of misacylated Glu-tRNA(Gln) in the mitochondria. The reaction takes place in the presence of glutamine and ATP through an activated gamma-phospho-Glu-tRNA(Gln). This Yarrowia lipolytica (strain CLIB 122 / E 150) (Yeast) protein is Glutamyl-tRNA(Gln) amidotransferase subunit A, mitochondrial.